Consider the following 87-residue polypeptide: Large ribosomal subunit protein bL28 (87 aa).

It belongs to the bacterial ribosomal protein bL28 family.

In Methylacidiphilum infernorum (isolate V4) (Methylokorus infernorum (strain V4)), this protein is Large ribosomal subunit protein bL28.